Consider the following 436-residue polypeptide: Acetyl-CoA decarbonylase/synthase complex subunit delta (436 aa).

This sequence belongs to the CdhD family. In terms of assembly, heterodimer of delta and gamma chains. The ACDS complex is made up of alpha, epsilon, beta, gamma and delta chains with a probable stoichiometry of (alpha(2)epsilon(2))(4)-beta(8)-(gamma(1)delta(1))(8).

It participates in one-carbon metabolism; methanogenesis from acetate. Part of a complex that catalyzes the reversible cleavage of acetyl-CoA, allowing growth on acetate as sole source of carbon and energy. Probably maintains the overall quaternary structure of the ACDS complex. This Methanosarcina mazei (strain ATCC BAA-159 / DSM 3647 / Goe1 / Go1 / JCM 11833 / OCM 88) (Methanosarcina frisia) protein is Acetyl-CoA decarbonylase/synthase complex subunit delta.